Consider the following 548-residue polypeptide: 4-methyl-5-nitrocatechol 5-monooxygenase (548 aa).

It belongs to the PheA/TfdB FAD monooxygenase family. As to quaternary structure, monomer. FAD serves as cofactor.

It carries out the reaction 4-methyl-5-nitrocatechol + NADPH + O2 = 2-hydroxy-5-methylquinone + nitrite + NADP(+) + H2O + H(+). The catalysed reaction is 4-methyl-5-nitrocatechol + NADH + O2 = 2-hydroxy-5-methylquinone + nitrite + NAD(+) + H2O + H(+). Activated by magnesium or manganese ions. Inhibited by concentrations of 4-methyl-5-nitrocatechol (MNC) above 2 mM. In terms of biological role, involved in the degradation of 2,4-dinitrotoluene (2,4-DNT). Catalyzes the removal of the nitro group from 4-methyl-5-nitrocatechol (MNC) to yield 2-hydroxy-5-methylquinone. It can use both NADH and NADPH as electron donors, but prefers NADPH. Also able to use 4-nitrocatechol as substrate. This Burkholderia sp protein is 4-methyl-5-nitrocatechol 5-monooxygenase.